The primary structure comprises 504 residues: MSVQVAAPGSAGLGPERLSPEELVRQTRQVVQGLEALRAEHHGLVGHLAEALAGQGPVTGLEMLEEKQQVVSHSLEAIELGLGEAQVLLALSAHVGALEAEKQRLRSQARRLAQENVWLREELEETQRRLRASEEAVAQLEEEKRHLEFLGQLRQYDPPAESQQSESPPRRDSLASLFPSEEEERKGPEAAGAAAAQQGGYEIPARLRTLHNLVIQYAGQGRYEVAVPLCRQALEDLERSSGHCHPDVATMLNILALVYRDQNKYKEATDLLHDALQIREQTLGPEHPAVAATLNNLAVLYGKRGRYREAEPLCQRALEIREKVLGADHPDVAKQLNNLALLCQNQGKFEDVERHYARALSIYEALGGPHDPNVAKTKNNLASAYLKQNKYQQAEELYKEILHKEDLPAPLGAPNTGTAGDAEQALRRSSSLSKIRESIRRGSEKLVSRLRGEGAAGAAGMKRAMSLNTLNVDAPRALGTQFPSWHLDKAPRTLSASTHDLSPH.

The stretch at 90-150 forms a coiled coil; the sequence is ALSAHVGALE…EEEKRHLEFL (61 aa). The interval 153 to 197 is disordered; sequence LRQYDPPAESQQSESPPRRDSLASLFPSEEEERKGPEAAGAAAAQ. A compositionally biased stretch (low complexity) spans 158 to 167; sequence PPAESQQSES. At S173 the chain carries Phosphoserine. TPR repeat units follow at residues 207–240, 249–282, 291–324, 333–366, and 375–408; these read LRTL…LERS, ATML…REQT, AATL…REKV, AKQL…YEAL, and AKTK…EDLP. The segment at 411–438 is disordered; the sequence is LGAPNTGTAGDAEQALRRSSSLSKIRES. S466 is modified (phosphoserine). T498 is modified (phosphothreonine). Phosphoserine is present on S502.

This sequence belongs to the kinesin light chain family. In terms of assembly, oligomer composed of two heavy chains and two light chains. Associates with microtubulin in an ATP-dependent manner. Interacts with KIF5C. Interacts with ODF1. Interacts with LRGUK. Interacts with VDAC2.

The protein localises to the cytoplasm. It is found in the cytoskeleton. Its subcellular location is the mitochondrion. Functionally, kinesin is a microtubule-associated force-producing protein that may play a role in organelle transport. Plays a role during spermiogenesis in the development of the sperm tail midpiece and in the normal function of spermatozoa. May play a role in the formation of the mitochondrial sheath formation in the developing spermatid midpiece. This Pongo abelii (Sumatran orangutan) protein is Kinesin light chain 3 (KLC3).